A 221-amino-acid chain; its full sequence is DELTA-actitoxin-Ucs1a (221 aa).

The signal sequence occupies residues 1–19; the sequence is MNRLIVLCLFVAMIYATIA. Residues 20-42 constitute a propeptide that is removed on maturation; the sequence is LPKKEDISNDERSISVSKVPVKK. The interval 45 to 54 is plays an important role in the hemolytic activity; sequence AIAGAVIEGA. The tract at residues 53-72 is N-terminal region; sequence GAKLTFGILEKILTVLGDIN. 7 residues coordinate phosphocholine: serine 96, valine 129, serine 147, proline 149, tyrosine 175, tyrosine 179, and tyrosine 180. Residues 147–162 form a trp-rich region, which is important for the binding to lipid membrane region; the sequence is SVPYDYNLYSNWWNIK. Residues 186–188 carry the Cell attachment site, crucial for protein stability motif; sequence KGD.

Belongs to the actinoporin family. Sea anemone subfamily. As to quaternary structure, octamer or nonamer in membranes. Monomer in the soluble state.

Its subcellular location is the secreted. It is found in the nematocyst. The protein resides in the target cell membrane. Pore-forming protein that forms cations-selective hydrophilic pores of around 1 nm and causes cytolysis. Pore formation is a multi-step process that involves specific recognition of membrane sphingomyelin (but neither cholesterol nor phosphatidylcholine) using aromatic rich region and adjacent phosphocholine (POC) binding site, firm binding to the membrane (mainly driven by hydrophobic interactions) accompanied by the transfer of the N-terminal region to the lipid-water interface and finally pore formation after oligomerization of monomers. In Urticina crassicornis (Mottled anemone), this protein is DELTA-actitoxin-Ucs1a.